The chain runs to 345 residues: Chorismate synthase (345 aa).

It belongs to the chorismate synthase family. As to quaternary structure, homotetramer. FMNH2 is required as a cofactor.

The enzyme catalyses 5-O-(1-carboxyvinyl)-3-phosphoshikimate = chorismate + phosphate. It participates in metabolic intermediate biosynthesis; chorismate biosynthesis; chorismate from D-erythrose 4-phosphate and phosphoenolpyruvate: step 7/7. This Carsonella ruddii (strain PV) protein is Chorismate synthase (aroC).